The sequence spans 676 residues: Double-stranded RNA-specific editase Adar (676 aa).

The disordered stretch occupies residues 1–51 (MKFDSRVMLNSANNNSPQHPVSAPSDINMNGYNRKLPQKRGYEMPKYSDPK). Polar residues predominate over residues 8–31 (MLNSANNNSPQHPVSAPSDINMNG). Basic and acidic residues predominate over residues 40–51 (RGYEMPKYSDPK). DRBM domains are found at residues 61–127 (QPKN…SFIQ) and 197–272 (ITVD…SLCN). The A to I editase domain occupies 348–672 (SVSTGTKCVS…LKKPIEQDEF (325 aa)). Histidine 372 lines the Zn(2+) pocket. Glutamate 374 serves as the catalytic Proton donor. Residues cysteine 430 and cysteine 493 each coordinate Zn(2+).

In terms of tissue distribution, expressed in embryonic nervous system; late stage 13 sees ventral nerve cord expression which spreads to brain by stage 16. Expression is maintained through to adulthood.

Functionally, has A-to-I RNA editing activity on extended dsRNA: edits RNA-binding protein Rnp4F. A-to-I editing of pre-mRNAs acts predominantly through nervous system targets to affect adult nervous system integrity, function and behavior. Essential for adaptation to environmental stresses, such as oxygen deprivation, and for the prevention of premature neuronal degeneration, through the editing of ion channels as targets. This chain is Double-stranded RNA-specific editase Adar, found in Drosophila melanogaster (Fruit fly).